The chain runs to 197 residues: Shikimate kinase (197 aa).

An ATP-binding site is contributed by 26 to 31 (GSGKSR). Residue Ser-30 coordinates Mg(2+). The substrate site is built by Asp-48, Arg-72, and Gly-94. Arg-132 provides a ligand contact to ATP. Residue Arg-150 participates in substrate binding.

The protein belongs to the shikimate kinase family. In terms of assembly, monomer. The cofactor is Mg(2+).

It is found in the cytoplasm. It catalyses the reaction shikimate + ATP = 3-phosphoshikimate + ADP + H(+). The protein operates within metabolic intermediate biosynthesis; chorismate biosynthesis; chorismate from D-erythrose 4-phosphate and phosphoenolpyruvate: step 5/7. Catalyzes the specific phosphorylation of the 3-hydroxyl group of shikimic acid using ATP as a cosubstrate. The polypeptide is Shikimate kinase (Prochlorococcus marinus (strain MIT 9211)).